Here is a 224-residue protein sequence, read N- to C-terminus: Urease accessory protein UreF (224 aa).

The protein belongs to the UreF family. In terms of assembly, ureD, UreF and UreG form a complex that acts as a GTP-hydrolysis-dependent molecular chaperone, activating the urease apoprotein by helping to assemble the nickel containing metallocenter of UreC. The UreE protein probably delivers the nickel.

Its subcellular location is the cytoplasm. Required for maturation of urease via the functional incorporation of the urease nickel metallocenter. In Pseudomonas fluorescens (strain SBW25), this protein is Urease accessory protein UreF.